The chain runs to 155 residues: Ribonuclease H (155 aa).

One can recognise an RNase H type-1 domain in the interval 1 to 142 (MLKQVEIFTD…CDVLARDAAS (142 aa)). Mg(2+)-binding residues include D10, E48, D70, and D134.

The protein belongs to the RNase H family. Monomer. The cofactor is Mg(2+).

The protein localises to the cytoplasm. It catalyses the reaction Endonucleolytic cleavage to 5'-phosphomonoester.. Functionally, endonuclease that specifically degrades the RNA of RNA-DNA hybrids. The sequence is that of Ribonuclease H from Serratia proteamaculans (strain 568).